We begin with the raw amino-acid sequence, 114 residues long: MSIGLLCCAALSLLWAGPVNAGVTQTPKFQVLKTGQSMTLQCAQDMNHEYMSWYRQDPGMGLRLIHYSVGAGITDQGEVPNGYNVSRSTTEDFPLRLLSAAPSQTSVYFCASSY.

A signal peptide spans 1 to 21; sequence MSIGLLCCAALSLLWAGPVNA. Positions 22–114 constitute an Ig-like domain; it reads GVTQTPKFQV…TSVYFCASSY (93 aa). Residues C42 and C110 are joined by a disulfide bond. An N-linked (GlcNAc...) asparagine glycan is attached at N84.

Alpha-beta TR is a heterodimer composed of an alpha and beta chain; disulfide-linked. The alpha-beta TR is associated with the transmembrane signaling CD3 coreceptor proteins to form the TR-CD3 (TcR or TCR). The assembly of alpha-beta TR heterodimers with CD3 occurs in the endoplasmic reticulum where a single alpha-beta TR heterodimer associates with one CD3D-CD3E heterodimer, one CD3G-CD3E heterodimer and one CD247 homodimer forming a stable octameric structure. CD3D-CD3E and CD3G-CD3E heterodimers preferentially associate with TR alpha and TR beta chains, respectively. The association of the CD247 homodimer is the last step of TcR assembly in the endoplasmic reticulum and is required for transport to the cell surface.

Its subcellular location is the cell membrane. V region of the variable domain of T cell receptor (TR) beta chain that participates in the antigen recognition. Alpha-beta T cell receptors are antigen specific receptors which are essential to the immune response and are present on the cell surface of T lymphocytes. Recognize peptide-major histocompatibility (MH) (pMH) complexes that are displayed by antigen presenting cells (APC), a prerequisite for efficient T cell adaptive immunity against pathogens. Binding of alpha-beta TR to pMH complex initiates TR-CD3 clustering on the cell surface and intracellular activation of LCK that phosphorylates the ITAM motifs of CD3G, CD3D, CD3E and CD247 enabling the recruitment of ZAP70. In turn ZAP70 phosphorylates LAT, which recruits numerous signaling molecules to form the LAT signalosome. The LAT signalosome propagates signal branching to three major signaling pathways, the calcium, the mitogen-activated protein kinase (MAPK) kinase and the nuclear factor NF-kappa-B (NF-kB) pathways, leading to the mobilization of transcription factors that are critical for gene expression and essential for T cell growth and differentiation. The T cell repertoire is generated in the thymus, by V-(D)-J rearrangement. This repertoire is then shaped by intrathymic selection events to generate a peripheral T cell pool of self-MH restricted, non-autoaggressive T cells. Post-thymic interaction of alpha-beta TR with the pMH complexes shapes TR structural and functional avidity. This Homo sapiens (Human) protein is T cell receptor beta variable 6-5.